Consider the following 272-residue polypeptide: Large ribosomal subunit protein uL2cz/uL2cy (272 aa).

Disordered regions lie at residues 1–33 (MAIHLYKTSTSSTRNGAVQVKSNPRNNLISGQR) and 220–272 (VMNP…RRSK). Residue alanine 2 is modified to N-methylalanine. A compositionally biased stretch (polar residues) spans 7–30 (KTSTSSTRNGAVQVKSNPRNNLIS).

The protein belongs to the universal ribosomal protein uL2 family. Component of the chloroplast large ribosomal subunit (LSU). Mature 70S chloroplast ribosomes of higher plants consist of a small (30S) and a large (50S) subunit. The 30S small subunit contains 1 molecule of ribosomal RNA (16S rRNA) and 24 different proteins. The 50S large subunit contains 3 rRNA molecules (23S, 5S and 4.5S rRNA) and 33 different proteins.

It is found in the plastid. Its subcellular location is the chloroplast. Functionally, component of the chloroplast ribosome (chloro-ribosome), a dedicated translation machinery responsible for the synthesis of chloroplast genome-encoded proteins, including proteins of the transcription and translation machinery and components of the photosynthetic apparatus. This Spinacia oleracea (Spinach) protein is Large ribosomal subunit protein uL2cz/uL2cy (rpl2-A).